The primary structure comprises 50 residues: PsaJ-like protein asl3190 (50 aa).

A helical membrane pass occupies residues 21-41 (VLAVISISVAFSTWAIFNYIF).

The protein belongs to the PsaJ family.

Its subcellular location is the cellular thylakoid membrane. The polypeptide is PsaJ-like protein asl3190 (Nostoc sp. (strain PCC 7120 / SAG 25.82 / UTEX 2576)).